The primary structure comprises 45 residues: U1-ctenitoxin-Pk1a (45 aa).

Intrachain disulfides connect cysteine 3/cysteine 16, cysteine 10/cysteine 25, cysteine 15/cysteine 34, and cysteine 27/cysteine 32.

As to expression, expressed by the venom gland.

The protein resides in the secreted. Functionally, neurotoxin. Causes rapid general flaccid paralysis and death in mice at dose levels of 5 ug per mouse. This is U1-ctenitoxin-Pk1a from Phoneutria keyserlingi (Brazilian wandering spider).